The following is a 194-amino-acid chain: Fe/S biogenesis protein NfuA (194 aa).

Cysteine 152 and cysteine 155 together coordinate [4Fe-4S] cluster.

This sequence belongs to the NfuA family. In terms of assembly, homodimer. [4Fe-4S] cluster serves as cofactor.

Its function is as follows. Involved in iron-sulfur cluster biogenesis. Binds a 4Fe-4S cluster, can transfer this cluster to apoproteins, and thereby intervenes in the maturation of Fe/S proteins. Could also act as a scaffold/chaperone for damaged Fe/S proteins. In Teredinibacter turnerae (strain ATCC 39867 / T7901), this protein is Fe/S biogenesis protein NfuA.